Here is a 491-residue protein sequence, read N- to C-terminus: MPAVQLLLLACPVWDVGARTAQLRKANDRSGRCQYTFSVASPNESSCPEQSQAMSVIHNLQKDSSTQRLDLEATKARLSSLESLLHHQLTLDRAAGPQETPEGLQRELGTLRRERDQLETQTRELETAYSNLLRDKSVLEEEKKRLRQENENLARRLESSSQEVARLRRGQCPQTRDTARDVPPGSREVSTWNLDTLAFQELKSELTEVPASRILKESPSGHLQSREGDNGCGELVWVGEPLTLRTAETITGKYGVWMRDPKPTYPYTRETTWRIDTVGTDVRQVFEYDLISQFMQGYPSKVHILPRPLESTGAVVYSGNLYFQGAESRTVIRYELNTETVKAQKEIPGAGYHGQFPYSWGGYTDIDLAVDESGLWVIYSTDEAKGAIVLSKLNPENLELEQTWETNIRKQSVANAFIICGTLYTVSSYSSADATVNFAYDTGTGISKTLTIPFKNRYKYSSMIDYNPLEKKLFAWDNLNMVTYDIKLSKM.

A signal peptide spans 1–18; that stretch reads MPAVQLLLLACPVWDVGA. N-linked (GlcNAc...) asparagine glycosylation occurs at N43. Residues 98 to 171 adopt a coiled-coil conformation; sequence QETPEGLQRE…QEVARLRRGQ (74 aa). The interval 151–189 is disordered; sequence ENLARRLESSSQEVARLRRGQCPQTRDTARDVPPGSREV. One can recognise an Olfactomedin-like domain in the interval 231 to 490; that stretch reads GCGELVWVGE…MVTYDIKLSK (260 aa). C232 and C420 are joined by a disulfide. Residues D367, N415, A416, I464, and D465 each contribute to the Ca(2+) site.

As to quaternary structure, homodimer (via N-terminus). Can also form higher oligomers. Interacts with OLFM3, FN1, NRCAM, GLDN and NFASC. Interacts (via N-terminus) with MYL2. Interacts with SFRP1, FRZB, FZD7, FZD10, FZD1 and WIF1; regulates Wnt signaling. Interacts with SNTA1; regulates muscle hypertrophy. Interacts with ERBB2 and ERBB3; activates ERBB2-ERBB3 signaling pathway. Interacts with SNCG; affects its secretion and its aggregation. Post-translationally, palmitoylated. Undergoes a calcium-dependent proteolytic cleavage at Arg-213 by CAPN2 in the endoplasmic reticulum. The result is the production of two fragments, one of 35 kDa containing the C-terminal olfactomedin-like domain, and another of 20 kDa containing the N-terminal leucine zipper-like domain. In terms of processing, glycosylated.

It is found in the secreted. Its subcellular location is the golgi apparatus. It localises to the cytoplasmic vesicle. The protein localises to the extracellular space. The protein resides in the extracellular matrix. It is found in the extracellular exosome. Its subcellular location is the mitochondrion. It localises to the mitochondrion intermembrane space. The protein localises to the mitochondrion inner membrane. The protein resides in the mitochondrion outer membrane. It is found in the rough endoplasmic reticulum. Its subcellular location is the cell projection. It localises to the cilium. The protein localises to the endoplasmic reticulum. In terms of biological role, secreted glycoprotein regulating the activation of different signaling pathways in adjacent cells to control different processes including cell adhesion, cell-matrix adhesion, cytoskeleton organization and cell migration. Promotes substrate adhesion, spreading and formation of focal contacts. Negatively regulates cell-matrix adhesion and stress fiber assembly through Rho protein signal transduction. Modulates the organization of actin cytoskeleton by stimulating the formation of stress fibers through interactions with components of Wnt signaling pathways. Promotes cell migration through activation of PTK2 and the downstream phosphatidylinositol 3-kinase signaling. Plays a role in bone formation and promotes osteoblast differentiation in a dose-dependent manner through mitogen-activated protein kinase signaling. Mediates myelination in the peripheral nervous system through ERBB2/ERBB3 signaling. Plays a role as a regulator of muscle hypertrophy through the components of dystrophin-associated protein complex. Involved in positive regulation of mitochondrial depolarization. Plays a role in neurite outgrowth. May participate in the obstruction of fluid outflow in the trabecular meshwork. This Macaca fascicularis (Crab-eating macaque) protein is Myocilin (MYOC).